Here is a 634-residue protein sequence, read N- to C-terminus: Threonine--tRNA ligase (634 aa).

Positions 1-61 (MINIRFPDGS…NSNCELRLIT (61 aa)) constitute a TGS domain. Positions 241-532 (DHRKIGKVLD…LIEHYAGNLP (292 aa)) are catalytic. Cys332, His383, and His509 together coordinate Zn(2+).

The protein belongs to the class-II aminoacyl-tRNA synthetase family. In terms of assembly, homodimer. The cofactor is Zn(2+).

It localises to the cytoplasm. The enzyme catalyses tRNA(Thr) + L-threonine + ATP = L-threonyl-tRNA(Thr) + AMP + diphosphate + H(+). Functionally, catalyzes the attachment of threonine to tRNA(Thr) in a two-step reaction: L-threonine is first activated by ATP to form Thr-AMP and then transferred to the acceptor end of tRNA(Thr). Also edits incorrectly charged L-seryl-tRNA(Thr). The sequence is that of Threonine--tRNA ligase from Francisella tularensis subsp. holarctica (strain FTNF002-00 / FTA).